We begin with the raw amino-acid sequence, 238 residues long: Large ribosomal subunit protein uL2 (238 aa).

The tract at residues 200–238 (HGGGLHQSVSRPSTVSRNAPPGRKVGHIAARRTGRKEGK) is disordered. Residues 206 to 216 (QSVSRPSTVSR) show a composition bias toward polar residues. Basic residues predominate over residues 223–238 (KVGHIAARRTGRKEGK).

Belongs to the universal ribosomal protein uL2 family. Part of the 50S ribosomal subunit. Forms a bridge to the 30S subunit in the 70S ribosome.

One of the primary rRNA binding proteins. Required for association of the 30S and 50S subunits to form the 70S ribosome, for tRNA binding and peptide bond formation. It has been suggested to have peptidyltransferase activity; this is somewhat controversial. Makes several contacts with the 16S rRNA in the 70S ribosome. The protein is Large ribosomal subunit protein uL2 of Saccharolobus islandicus (strain Y.N.15.51 / Yellowstone #2) (Sulfolobus islandicus).